Consider the following 865-residue polypeptide: Rifampicin phosphotransferase (865 aa).

The tract at residues 2–314 (SGRLVVDLQD…FHIVQSRPIT (313 aa)) is ATP-binding. Residues Lys23, Arg117, Gly132, Thr136, Gln183, Glu297, Gln309, and Arg311 each coordinate ATP. Residues 327–752 (FRVYLSVGHQ…TSEGVALSGA (426 aa)) form a rifampicin-binding region. A disordered region spans residues 403–430 (ENGEFEPTPAETDGGAPPAGDGAEPDEA). Positions 409–424 (PTPAETDGGAPPAGDG) are enriched in low complexity. A swivel phosphohistidine region spans residues 765–863 (GLAVSAGTVE…VHGTEGYIEL (99 aa)). The active-site Tele-phosphohistidine intermediate is His823.

The protein belongs to the rifampicin phosphotransferase family.

The enzyme catalyses rifampicin + ATP + H2O = 21-phosphorifampicin + AMP + phosphate + 2 H(+). Functionally, catalyzes the phosphorylation of rifampicin, also known as rifampin (RIF), leading to its inactivation. Confers high level resistance to a variety of clinically used rifamycin antibiotics. This chain is Rifampicin phosphotransferase, found in Streptomyces sp.